The sequence spans 308 residues: tRNA dimethylallyltransferase (308 aa).

Residue 8 to 15 (GATAVGKT) participates in ATP binding. Residue 10–15 (TAVGKT) participates in substrate binding. Residues 33 to 36 (DSRQ) form an interaction with substrate tRNA region.

This sequence belongs to the IPP transferase family. In terms of assembly, monomer. Requires Mg(2+) as cofactor.

It catalyses the reaction adenosine(37) in tRNA + dimethylallyl diphosphate = N(6)-dimethylallyladenosine(37) in tRNA + diphosphate. Functionally, catalyzes the transfer of a dimethylallyl group onto the adenine at position 37 in tRNAs that read codons beginning with uridine, leading to the formation of N6-(dimethylallyl)adenosine (i(6)A). This is tRNA dimethylallyltransferase from Kosmotoga olearia (strain ATCC BAA-1733 / DSM 21960 / TBF 19.5.1).